We begin with the raw amino-acid sequence, 840 residues long: Translation initiation factor IF-2 (840 aa).

Positions 1-251 are disordered; it reads MTEEKKFSSS…GPAVPATERK (251 aa). 2 stretches are compositionally biased toward polar residues: residues 38 to 50 and 65 to 83; these read DGTNSSAGTTPRS and NRHTNSSRSNTQGGNASRP. Low complexity predominate over residues 84–102; sequence NQSKSQGQGGRNNQRPGSR. Basic and acidic residues-rich tracts occupy residues 110-135 and 158-168; these read PMIREKKNWSTKPREGQIDYSKKTDN and KPAEQSKKAAE. The segment covering 169 to 207 has biased composition (low complexity); that stretch reads KPAQTKPKTAETKTTATTTQSGTGKFGGALASGNNSARN. The span at 230–239 shows a compositional bias: basic residues; sequence GSKKSRRIAA. Residues 341 to 510 enclose the tr-type G domain; that stretch reads ARPPVVTIMG…LLQAEVLELK (170 aa). A G1 region spans residues 350-357; it reads GHVDHGKT. Residue 350-357 participates in GTP binding; sequence GHVDHGKT. Residues 375–379 form a G2 region; that stretch reads GITQH. Positions 396–399 are G3; that stretch reads DTPG. Residues 396-400 and 450-453 contribute to the GTP site; these read DTPGH and NKID. The interval 450–453 is G4; it reads NKID. The interval 486-488 is G5; that stretch reads SAK.

This sequence belongs to the TRAFAC class translation factor GTPase superfamily. Classic translation factor GTPase family. IF-2 subfamily.

It is found in the cytoplasm. One of the essential components for the initiation of protein synthesis. Protects formylmethionyl-tRNA from spontaneous hydrolysis and promotes its binding to the 30S ribosomal subunits. Also involved in the hydrolysis of GTP during the formation of the 70S ribosomal complex. In Leuconostoc citreum (strain KM20), this protein is Translation initiation factor IF-2.